The primary structure comprises 374 residues: Envelope glycoprotein M (374 aa).

Residues 1 to 16 (MKSSKKDIFILHIWLK) are Intravirion-facing. Residues 17–37 (LMGCYVFMFITSVVLPIAAMF) form a helical membrane-spanning segment. Over 38–82 (PNLGFPCYYNTLVDYSKLNLREKNQAQHLTPTLFLEAPEMFFYVT) the chain is Virion surface. Residues 83-103 (YSFIVDCCSLVYYALAAVAVV) traverse the membrane as a helical segment. Topologically, residues 104-117 (KAKKHAPGLMALSQ) are intravirion. A helical transmembrane segment spans residues 118 to 138 (WIMAVGSPTLLYMAVLKLWTI). Topologically, residues 139-149 (QLYIHTLSYKH) are virion surface. A helical transmembrane segment spans residues 150–170 (IYLAAFVYCLHWLLSMVYTEC). Topologically, residues 171–207 (YITNVSSQWTSSELKKTIPENILLYRVVHVLKPIMMN) are intravirion. Residues 208–228 (VHLSVVALETLIFCLSFMMAI) form a helical membrane-spanning segment. Over 229–238 (GNSFYVMVSD) the chain is Virion surface. The helical transmembrane segment at 239 to 259 (IVFGAINLYLILPIIWYFVTE) threads the bilayer. Over 260 to 269 (FWLSKYLPRQ) the chain is Intravirion. The chain crosses the membrane as a helical span at residues 270 to 290 (FGFYFGVLVASIILILPVVRY). Topologically, residues 291 to 301 (DKIFVAAQIHR) are virion surface. A helical membrane pass occupies residues 302 to 322 (AVSINIAMIPLCALVALLVRA). Residues 323–374 (CRVYTDRKKIAYTALPSKPQTIKYTKPIEPSTKQAPDSSIFLEEESDTDFEQ) lie on the Intravirion side of the membrane. A disordered region spans residues 345 to 374 (KYTKPIEPSTKQAPDSSIFLEEESDTDFEQ). The span at 364-374 (LEEESDTDFEQ) shows a compositional bias: acidic residues.

It belongs to the herpesviridae glycoprotein M family. Interacts (via N-terminus) with gN (via N-terminus). The gM-gN heterodimer forms the gCII complex.

It is found in the virion membrane. The protein localises to the host Golgi apparatus. It localises to the host trans-Golgi network. Its subcellular location is the host endosome membrane. The protein resides in the host nucleus inner membrane. Its function is as follows. Envelope glycoprotein important for virion assembly and egress. Plays a role in the correct incorporation of gH-gL into virion membrane. Directs the glycoprotein N (gN) to the host trans-Golgi network. In Connochaetes taurinus (Blue wildebeest), this protein is Envelope glycoprotein M.